Consider the following 321-residue polypeptide: Malate dehydrogenase (321 aa).

NAD(+) is bound by residues 10-15 (GSGMIG) and Asp-34. Residues Arg-83 and Arg-89 each contribute to the substrate site. NAD(+)-binding positions include Asn-96 and 119–121 (ITN). Asn-121 and Arg-152 together coordinate substrate. His-176 acts as the Proton acceptor in catalysis.

The protein belongs to the LDH/MDH superfamily. MDH type 3 family.

It carries out the reaction (S)-malate + NAD(+) = oxaloacetate + NADH + H(+). In terms of biological role, catalyzes the reversible oxidation of malate to oxaloacetate. The polypeptide is Malate dehydrogenase (Chelativorans sp. (strain BNC1)).